The chain runs to 302 residues: (2S)-3-sulfopropanediol sulfolyase activating enzyme (302 aa).

Residues 19 to 301 (HDGEGIRTLV…RLNIMLKSYE (283 aa)) enclose the Radical SAM core domain. Cys33, Cys37, Cys40, Cys59, Cys65, Cys68, Cys72, Cys91, Cys94, Cys97, and Cys101 together coordinate [4Fe-4S] cluster. Residue 39-41 (WCS) coordinates S-adenosyl-L-methionine. 2 4Fe-4S ferredoxin-type domains span residues 50-81 (PERA…SIVG) and 82-111 (GLVC…VYGE). S-adenosyl-L-methionine is bound by residues Gly141 and 190–192 (DIK).

The protein belongs to the organic radical-activating enzymes family. [4Fe-4S] cluster serves as cofactor.

The catalysed reaction is glycyl-[protein] + reduced [flavodoxin] + S-adenosyl-L-methionine = glycin-2-yl radical-[protein] + semiquinone [flavodoxin] + 5'-deoxyadenosine + L-methionine + H(+). Its pathway is organosulfur degradation; alkanesulfonate degradation. Its function is as follows. Involved in the degradation of the organosulfur compound 2(S)-dihydroxypropanesulfonate (DHPS). Catalyzes activation of the (2S)-3-sulfopropanediol sulfolyase HpsG under anaerobic conditions by generation of an organic free radical on a glycine residue. The protein is (2S)-3-sulfopropanediol sulfolyase activating enzyme of Bilophila wadsworthia (strain 3_1_6).